A 689-amino-acid chain; its full sequence is DNA topoisomerase 1 (689 aa).

A Toprim domain is found at 3–113; sequence DNLVIVESPA…KENRVVFNEI (111 aa). Residues Glu-9 and Asp-82 each coordinate Mg(2+). In terms of domain architecture, Topo IA-type catalytic spans 129–557; sequence EMNLVDAQQA…FFSSFKQDVE (429 aa). The interaction with DNA stretch occupies residues 163 to 168; that stretch reads SAGRVQ. Residue Tyr-298 is the O-(5'-phospho-DNA)-tyrosine intermediate of the active site. The disordered stretch occupies residues 328 to 357; it reads SKRKASGKQGDQDAHEAIRPSSTMRTPDDM. 3 C4-type zinc fingers span residues 577–603, 617–645, and 658–681; these read CEVCGSPMVIKMGRYGKFMACSNFPDC, CPKCNDGDVVERKSKKNRVFYGCSKYPEC, and CPKCNQYLVENKKGKTTQVICSNC.

It belongs to the type IA topoisomerase family. In terms of assembly, monomer. Mg(2+) is required as a cofactor.

It catalyses the reaction ATP-independent breakage of single-stranded DNA, followed by passage and rejoining.. Functionally, releases the supercoiling and torsional tension of DNA, which is introduced during the DNA replication and transcription, by transiently cleaving and rejoining one strand of the DNA duplex. Introduces a single-strand break via transesterification at a target site in duplex DNA. The scissile phosphodiester is attacked by the catalytic tyrosine of the enzyme, resulting in the formation of a DNA-(5'-phosphotyrosyl)-enzyme intermediate and the expulsion of a 3'-OH DNA strand. The free DNA strand then undergoes passage around the unbroken strand, thus removing DNA supercoils. Finally, in the religation step, the DNA 3'-OH attacks the covalent intermediate to expel the active-site tyrosine and restore the DNA phosphodiester backbone. The polypeptide is DNA topoisomerase 1 (Staphylococcus aureus).